The sequence spans 549 residues: Cobalt-dependent inorganic pyrophosphatase (549 aa).

CBS domains lie at 74 to 130 and 252 to 310; these read EMDK…IWDS and MTKD…VIQV. AMP-binding positions include K100, 116 to 119, T253, V258, and 278 to 280; these read STSN and YSN.

It belongs to the PPase family. As to quaternary structure, homodimer. It depends on Co(2+) as a cofactor. The cofactor is Mn(2+). Requires Mg(2+) as cofactor.

It catalyses the reaction diphosphate + H2O = 2 phosphate + H(+). With respect to regulation, inhibited by AMP and ADP with 25% and 35% of activity remaining, respectively, at saturating conditions. Activated 5-fold by diadenosine polyphosphates(Ap[n]A) with n&gt;2 (Ap3A, Ap4A, Ap5A, Ap6A) at saturating conditions. The chain is Cobalt-dependent inorganic pyrophosphatase from Clostridium perfringens (strain 13 / Type A).